The primary structure comprises 131 residues: Large ribosomal subunit protein bL19 (131 aa).

The disordered stretch occupies residues 110–131 (KSARIAERTDDRAKKAKATAAE). Over residues 113–122 (RIAERTDDRA) the composition is skewed to basic and acidic residues.

The protein belongs to the bacterial ribosomal protein bL19 family.

Its function is as follows. This protein is located at the 30S-50S ribosomal subunit interface and may play a role in the structure and function of the aminoacyl-tRNA binding site. In Azorhizobium caulinodans (strain ATCC 43989 / DSM 5975 / JCM 20966 / LMG 6465 / NBRC 14845 / NCIMB 13405 / ORS 571), this protein is Large ribosomal subunit protein bL19.